The following is a 607-amino-acid chain: ATP-dependent RNA helicase DBP6 (607 aa).

The disordered stretch occupies residues 1 to 83 (MFAARFDPSR…GTGEADKRHQ (83 aa)). Residues 34 to 59 (QDESESEMSSAESEDEAMQLDDEEEV) show a composition bias toward acidic residues. Basic and acidic residues predominate over residues 60-69 (VDSKGKENHG). The Q motif signature appears at 184–192 (AFPIQTALL). Residues 208–388 (RYYTRKVGDI…DLQLHNPKLF (181 aa)) enclose the Helicase ATP-binding domain. 221-228 (ASTGSGKT) lines the ATP pocket. The DEAD box motif lies at 328-331 (DEAD). Positions 419–578 (ILLRLLPLLS…GSHLFFDEEQ (160 aa)) constitute a Helicase C-terminal domain.

The protein belongs to the DEAD box helicase family. DDX51/DBP6 subfamily. As to quaternary structure, associated with pre-ribosomal particles.

It is found in the nucleus. The protein localises to the nucleolus. It catalyses the reaction ATP + H2O = ADP + phosphate + H(+). In terms of biological role, ATP-binding RNA helicase involved in the biogenesis of 60S ribosomal subunits and is required for the normal formation of 25S and 5.8S rRNAs. This is ATP-dependent RNA helicase DBP6 (DBP6) from Eremothecium gossypii (strain ATCC 10895 / CBS 109.51 / FGSC 9923 / NRRL Y-1056) (Yeast).